The chain runs to 459 residues: FBD-associated F-box protein At4g13985 (459 aa).

Residues 18 to 64 enclose the F-box domain; sequence VDRLRNLPDCLLFKILLNLPTKDVVKLSVLSRRWRNVWRYVPGLDLE. The 55-residue stretch at 375 to 429 folds into the FBD domain; the sequence is KEGANILPGPRRFLTSLEYVKIAKPMAAEASEIKLKLVSYFLENSTILKKLTLCL.

The polypeptide is FBD-associated F-box protein At4g13985 (Arabidopsis thaliana (Mouse-ear cress)).